We begin with the raw amino-acid sequence, 432 residues long: Probable protein phosphatase 2C 33 (432 aa).

One can recognise a PPM-type phosphatase domain in the interval 27-298; that stretch reads GGGSERPLVR…DDTTCVVVDI (272 aa). 4 residues coordinate Mn(2+): D74, G75, D250, and D289.

The protein belongs to the PP2C family. Mg(2+) serves as cofactor. Mn(2+) is required as a cofactor.

The catalysed reaction is O-phospho-L-seryl-[protein] + H2O = L-seryl-[protein] + phosphate. It carries out the reaction O-phospho-L-threonyl-[protein] + H2O = L-threonyl-[protein] + phosphate. The chain is Probable protein phosphatase 2C 33 from Oryza sativa subsp. japonica (Rice).